A 398-amino-acid chain; its full sequence is Phospholipase C (398 aa).

Residues 1-26 (MKALKKVSNILCVLGLCTLMGGTSYA) form the signal peptide. The Zn(2+) site is built by tryptophan 27, histidine 37, aspartate 82, histidine 94, histidine 152, aspartate 156, histidine 162, histidine 174, and glutamate 178. The Zn-dependent PLC domain occupies 27 to 276 (WDGKKDGTGT…NEVSNGNTGD (250 aa)). Residues 273 to 281 (NTGDNDSLT) are linker. The 117-residue stretch at 282–398 (NEFNIVLKTA…TGNETYYINK (117 aa)) folds into the PLAT domain. Ca(2+) is bound by residues glycine 297, threonine 298, aspartate 299, aspartate 319, asparagine 320, glycine 322, asparagine 323, aspartate 324, and aspartate 363.

The protein belongs to the bacterial zinc-metallophospholipase C family. It depends on Ca(2+) as a cofactor. The cofactor is Zn(2+).

Its subcellular location is the secreted. The enzyme catalyses a 1,2-diacyl-sn-glycero-3-phosphocholine + H2O = phosphocholine + a 1,2-diacyl-sn-glycerol + H(+). Bacterial hemolysins are exotoxins that attack blood cell membranes and cause cell rupture. Binds to eukaryotic membranes where it hydrolyzes phosphatidylcholine. This enzyme has 10-fold less activity towards sphingomyelin than its C.perfringens counterpart, is approximately 100-fold less hemolytic against mouse erythrocytes and at least 100-fold less toxic in mice. In Paraclostridium bifermentans (Clostridium bifermentans), this protein is Phospholipase C (plc).